The sequence spans 159 residues: U1 small nuclear ribonucleoprotein C (159 aa).

A Matrin-type zinc finger spans residues 4-36 (FYCDYCDTYLTHDSPSVRKTHCSGRKHKENVKD). Disordered regions lie at residues 63–95 (PPTP…MPAP) and 139–159 (MRPP…RPDR). The segment covering 77 to 95 (IPPPPSLGGPPRPGMMPAP) has biased composition (pro residues).

It belongs to the U1 small nuclear ribonucleoprotein C family. In terms of assembly, component of the U1 snRNP. The U1 snRNP is composed of the U1 snRNA and the 7 core Sm proteins snrpb, snrpd1, snrpd2, snrpd3, snrpe, snrpf and snrpg that assemble in a heptameric protein ring on the Sm site of the small nuclear RNA to form the core snRNP, and at least 3 U1 snRNP-specific proteins snrnp70/U1-70K, snrpa/U1-A and snrpc/U1-C. snrpc/U1-C interacts with U1 snRNA and the 5' splice-site region of the pre-mRNA.

Its subcellular location is the nucleus. Its function is as follows. Component of the spliceosomal U1 snRNP, which is essential for recognition of the pre-mRNA 5' splice-site and the subsequent assembly of the spliceosome. SNRPC/U1-C is directly involved in initial 5' splice-site recognition for both constitutive and regulated alternative splicing. The interaction with the 5' splice-site seems to precede base-pairing between the pre-mRNA and the U1 snRNA. Stimulates commitment or early (E) complex formation by stabilizing the base pairing of the 5' end of the U1 snRNA and the 5' splice-site region. The chain is U1 small nuclear ribonucleoprotein C from Xenopus laevis (African clawed frog).